Here is a 244-residue protein sequence, read N- to C-terminus: Carboxy-S-adenosyl-L-methionine synthase (244 aa).

S-adenosyl-L-methionine-binding positions include Tyr-40, 65–67 (GCS), 90–91 (DN), 119–120 (DL), Asn-134, and Arg-201.

Belongs to the class I-like SAM-binding methyltransferase superfamily. Cx-SAM synthase family. As to quaternary structure, homodimer.

It carries out the reaction prephenate + S-adenosyl-L-methionine = carboxy-S-adenosyl-L-methionine + 3-phenylpyruvate + H2O. Functionally, catalyzes the conversion of S-adenosyl-L-methionine (SAM) to carboxy-S-adenosyl-L-methionine (Cx-SAM). The polypeptide is Carboxy-S-adenosyl-L-methionine synthase (Geobacter metallireducens (strain ATCC 53774 / DSM 7210 / GS-15)).